Reading from the N-terminus, the 39-residue chain is SGSKTAEIDDGCFGLPLDPIGSTSGMGCRSVPKPIPGGS.

The propeptide occupies S1–I8. The interval S1–S39 is disordered. A disulfide bond links C12 and C28.

It belongs to the natriuretic peptide family. As to expression, expressed by the venom gland.

Its subcellular location is the secreted. Functionally, snake venom natriuretic peptide that targets both NPR1 and NPR2. Exhibits hypotensive and vasodepressor activities. In Pseudechis australis (Mulga snake), this protein is Natriuretic peptide PaNP-d.